Consider the following 401-residue polypeptide: Decapping and exoribonuclease protein (401 aa).

The disordered stretch occupies residues 1–27; that stretch reads MEGNKSMQREKIDRPMKRGPEQNSLSP. Residues 7–20 show a composition bias toward basic and acidic residues; it reads MQREKIDRPMKRGP. Substrate is bound by residues Arg69, Glu114, and 149 to 151; that span reads WRG. A Mg(2+)-binding site is contributed by Glu210. Positions 235 and 252 each coordinate substrate. Glu252, Asp254, Glu271, and Leu272 together coordinate Mg(2+). 2 residues coordinate substrate: Lys273 and Gln298.

The protein belongs to the DXO/Dom3Z family. Mg(2+) is required as a cofactor.

It localises to the nucleus. It catalyses the reaction a 5'-end triphospho-ribonucleoside in mRNA + H2O = a 5'-end phospho-ribonucleoside in mRNA + diphosphate + H(+). It carries out the reaction a 5'-end NAD(+)-phospho-ribonucleoside in mRNA + H2O = a 5'-end phospho-ribonucleoside in mRNA + NAD(+) + H(+). The catalysed reaction is a 5'-end NAD(+)-phospho-ribonucleoside in snoRNA + H2O = a 5'-end phospho-ribonucleoside in snoRNA + NAD(+) + H(+). The enzyme catalyses a 5'-end (N(7)-methyl 5'-triphosphoguanosine)-ribonucleoside-ribonucleotide in mRNA + H2O = a (N(7)-methyl 5'-triphosphoguanosine)-nucleoside + a 5'-end phospho-ribonucleoside in mRNA + H(+). It catalyses the reaction a 5'-end FAD-phospho-ribonucleoside in mRNA + H2O = a 5'-end phospho-ribonucleoside in mRNA + FAD + H(+). It carries out the reaction a 5'-end CoA-ribonucleoside in mRNA + H2O = 3'-dephospho-CoA + a 5'-end phospho-ribonucleoside in mRNA + H(+). In terms of biological role, decapping enzyme for NAD-capped RNAs: specifically hydrolyzes the nicotinamide adenine dinucleotide (NAD) cap from a subset of RNAs by removing the entire NAD moiety from the 5'-end of an NAD-capped RNA. The NAD-cap is present at the 5'-end of some RNAs and snoRNAs. In contrast to the canonical 5'-end N7 methylguanosine (m7G) cap, the NAD cap promotes mRNA decay. Also acts as a non-canonical decapping enzyme that removes the entire cap structure of m7G capped or incompletely capped RNAs and mediates their subsequent degradation. Specifically degrades pre-mRNAs with a defective 5'-end m7G cap and is part of a pre-mRNA capping quality control. Has decapping activity toward incomplete 5'-end m7G cap mRNAs such as unmethylated 5'-end-capped RNA (cap0), while it has no activity toward 2'-O-ribose methylated m7G cap (cap1). Also has 5'-3' exoribonuclease activities: The 5'-end monophosphate RNA is then degraded by the 5'-3' exoribonuclease activity, enabling this enzyme to decap and degrade incompletely capped mRNAs. Also possesses RNA 5'-pyrophosphohydrolase activity by hydrolyzing the 5'-end triphosphate to release pyrophosphates. Exhibits decapping activity towards FAD-capped RNAs. Exhibits decapping activity towards dpCoA-capped RNAs in vitro. The chain is Decapping and exoribonuclease protein from Xenopus laevis (African clawed frog).